The chain runs to 698 residues: Polyribonucleotide nucleotidyltransferase (698 aa).

Residues D490 and D496 each coordinate Mg(2+). The region spanning 557-616 is the KH domain; that stretch reads PKVVTMTIKPDKIRDVIGPGGKKINEIIDETGVKLDIEQDGTIFIGAVDQAMINRAREII. One can recognise an S1 motif domain in the interval 626–694; it reads GQTYQATVKR…KQGRVNASHR (69 aa).

This sequence belongs to the polyribonucleotide nucleotidyltransferase family. Mg(2+) is required as a cofactor.

The protein localises to the cytoplasm. The enzyme catalyses RNA(n+1) + phosphate = RNA(n) + a ribonucleoside 5'-diphosphate. In terms of biological role, involved in mRNA degradation. Catalyzes the phosphorolysis of single-stranded polyribonucleotides processively in the 3'- to 5'-direction. The polypeptide is Polyribonucleotide nucleotidyltransferase (Staphylococcus aureus (strain MRSA252)).